A 619-amino-acid polypeptide reads, in one-letter code: Chaperone protein HscA homolog (619 aa).

This sequence belongs to the heat shock protein 70 family.

Chaperone involved in the maturation of iron-sulfur cluster-containing proteins. Has a low intrinsic ATPase activity which is markedly stimulated by HscB. This Chromobacterium violaceum (strain ATCC 12472 / DSM 30191 / JCM 1249 / CCUG 213 / NBRC 12614 / NCIMB 9131 / NCTC 9757 / MK) protein is Chaperone protein HscA homolog.